A 375-amino-acid polypeptide reads, in one-letter code: Chaperone protein DnaJ (375 aa).

The 66-residue stretch at 5–70 folds into the J domain; the sequence is DYYEVLGVSR…QKRAAYDQFG (66 aa). The CR-type zinc-finger motif lies at 131–209; it reads GTTVKIRVPS…CHGSGYVEEQ (79 aa). The Zn(2+) site is built by cysteine 144, cysteine 147, cysteine 161, cysteine 164, cysteine 183, cysteine 186, cysteine 197, and cysteine 200. CXXCXGXG motif repeat units lie at residues 144–151, 161–168, 183–190, and 197–204; these read CKSCSGSG, CGTCNGAG, CPRCRGAG, and CRSCHGSG.

The protein belongs to the DnaJ family. As to quaternary structure, homodimer. Zn(2+) serves as cofactor.

It is found in the cytoplasm. Its function is as follows. Participates actively in the response to hyperosmotic and heat shock by preventing the aggregation of stress-denatured proteins and by disaggregating proteins, also in an autonomous, DnaK-independent fashion. Unfolded proteins bind initially to DnaJ; upon interaction with the DnaJ-bound protein, DnaK hydrolyzes its bound ATP, resulting in the formation of a stable complex. GrpE releases ADP from DnaK; ATP binding to DnaK triggers the release of the substrate protein, thus completing the reaction cycle. Several rounds of ATP-dependent interactions between DnaJ, DnaK and GrpE are required for fully efficient folding. Also involved, together with DnaK and GrpE, in the DNA replication of plasmids through activation of initiation proteins. This Hahella chejuensis (strain KCTC 2396) protein is Chaperone protein DnaJ.